The chain runs to 197 residues: Probable chorismate pyruvate-lyase (197 aa).

Positions 1–14 (MRFDAADAHWRETP) are enriched in basic and acidic residues. Residues 1–25 (MRFDAADAHWRETPRPGASGAQKDW) are disordered. Substrate-binding residues include arginine 73, leucine 111, and glutamate 173.

This sequence belongs to the UbiC family.

The protein localises to the cytoplasm. It catalyses the reaction chorismate = 4-hydroxybenzoate + pyruvate. The protein operates within cofactor biosynthesis; ubiquinone biosynthesis. Functionally, removes the pyruvyl group from chorismate, with concomitant aromatization of the ring, to provide 4-hydroxybenzoate (4HB) for the ubiquinone pathway. This is Probable chorismate pyruvate-lyase from Burkholderia thailandensis (strain ATCC 700388 / DSM 13276 / CCUG 48851 / CIP 106301 / E264).